An 89-amino-acid chain; its full sequence is Small ribosomal subunit protein uS15 (89 aa).

The protein belongs to the universal ribosomal protein uS15 family. In terms of assembly, part of the 30S ribosomal subunit. Forms a bridge to the 50S subunit in the 70S ribosome, contacting the 23S rRNA.

In terms of biological role, one of the primary rRNA binding proteins, it binds directly to 16S rRNA where it helps nucleate assembly of the platform of the 30S subunit by binding and bridging several RNA helices of the 16S rRNA. Functionally, forms an intersubunit bridge (bridge B4) with the 23S rRNA of the 50S subunit in the ribosome. The polypeptide is Small ribosomal subunit protein uS15 (Magnetococcus marinus (strain ATCC BAA-1437 / JCM 17883 / MC-1)).